The chain runs to 359 residues: Cyclin-Y-like protein 1 (359 aa).

Ser67, Ser105, and Ser112 each carry phosphoserine. Residues 145–267 (VTLAIYYHIK…CQILKDITVE (123 aa)) form the Cyclin N-terminal domain. Ser344 is modified (phosphoserine).

The protein belongs to the cyclin family. Cyclin Y subfamily. As to quaternary structure, interacts with CDK16; this interaction mutually increases the stability of CDK16 and CCNYL1 and increases the kinase activity of CDK16.

It is found in the cell membrane. Key regulator of Wnt signaling implicated in various biological processes including male fertility, embryonic neurogenesis and cortex development. Activates the cyclin-dependent kinase CDK16, and promotes sperm maturation. In Homo sapiens (Human), this protein is Cyclin-Y-like protein 1.